Reading from the N-terminus, the 421-residue chain is 2',3'-cyclic-nucleotide 3'-phosphodiesterase (421 aa).

2 positions are modified to phosphoserine: Ser6 and Ser9. Tyr110 bears the Phosphotyrosine mark. Ser170 bears the Phosphoserine mark. His251 (proton acceptor) is an active-site residue. Position 253 (Thr253) interacts with substrate. Residue His330 is the Proton donor of the active site. Thr332 provides a ligand contact to substrate. The residue at position 359 (Ser359) is a Phosphoserine. A Cysteine methyl ester modification is found at Cys418. Cys418 is lipidated: S-farnesyl cysteine. Positions 419–421 (TII) are cleaved as a propeptide — removed in mature form.

This sequence belongs to the 2H phosphoesterase superfamily. CNPase family. In terms of assembly, exists as monomers and homodimers.

It is found in the membrane. The protein resides in the melanosome. It catalyses the reaction a nucleoside 2',3'-cyclic phosphate + H2O = a nucleoside 2'-phosphate + H(+). Functionally, catalyzes the formation of 2'-nucleotide products from 2',3'-cyclic substrates. May participate in RNA metabolism in the myelinating cell, CNP is the third most abundant protein in central nervous system myelin. In Homo sapiens (Human), this protein is 2',3'-cyclic-nucleotide 3'-phosphodiesterase.